The following is a 1393-amino-acid chain: Polarized growth protein RAX2 (1393 aa).

The signal sequence occupies residues 1 to 21; it reads MLVQFQQLLLLLISIIKLCQA. The Extracellular portion of the chain corresponds to 22–1329; it reads DDNDNSFFQP…TNKNLSRGKV (1308 aa). 48 N-linked (GlcNAc...) asparagine glycosylation sites follow: Asn-62, Asn-85, Asn-105, Asn-125, Asn-133, Asn-139, Asn-164, Asn-186, Asn-195, Asn-212, Asn-256, Asn-260, Asn-266, Asn-269, Asn-362, Asn-398, Asn-405, Asn-479, Asn-536, Asn-542, Asn-565, Asn-599, Asn-646, Asn-649, Asn-653, Asn-674, Asn-689, Asn-696, Asn-702, Asn-714, Asn-747, Asn-764, Asn-768, Asn-792, Asn-829, Asn-863, Asn-899, Asn-935, Asn-946, Asn-958, Asn-985, Asn-1020, Asn-1030, Asn-1041, Asn-1213, Asn-1232, Asn-1262, and Asn-1323. Residues 1330-1350 form a helical membrane-spanning segment; sequence VGISLACALGSTTLLGLLYII. Residues 1351–1393 lie on the Cytoplasmic side of the membrane; that stretch reads PYFALFKNRKDGYFQPERIHEDEMMDAVNPEDLLHEIDLQREK.

This sequence belongs to the RAX2 family.

It is found in the cell membrane. Its subcellular location is the cell tip. In terms of biological role, required for establishing sites of emergence of yeast and hyphal daughters and for maintaining the linearity of hyphal growth, but not involved in responses that require a reorientation of the direction of already established hyphal growth (tropisms). Does not play a role in penetration or injury of human epithelial cells. The chain is Polarized growth protein RAX2 from Candida albicans (strain SC5314 / ATCC MYA-2876) (Yeast).